Here is a 179-residue protein sequence, read N- to C-terminus: Large ribosomal subunit protein uL5 (179 aa).

The protein belongs to the universal ribosomal protein uL5 family. Part of the 50S ribosomal subunit; part of the 5S rRNA/L5/L18/L25 subcomplex. Contacts the 5S rRNA and the P site tRNA. Forms a bridge to the 30S subunit in the 70S ribosome.

Its function is as follows. This is one of the proteins that bind and probably mediate the attachment of the 5S RNA into the large ribosomal subunit, where it forms part of the central protuberance. In the 70S ribosome it contacts protein S13 of the 30S subunit (bridge B1b), connecting the 2 subunits; this bridge is implicated in subunit movement. Contacts the P site tRNA; the 5S rRNA and some of its associated proteins might help stabilize positioning of ribosome-bound tRNAs. This is Large ribosomal subunit protein uL5 from Nitrosomonas europaea (strain ATCC 19718 / CIP 103999 / KCTC 2705 / NBRC 14298).